A 257-amino-acid polypeptide reads, in one-letter code: tRNA (guanine-N(1)-)-methyltransferase (257 aa).

Residues glycine 112 and 136 to 141 each bind S-adenosyl-L-methionine; that span reads LGDYVL.

The protein belongs to the RNA methyltransferase TrmD family. As to quaternary structure, homodimer.

The protein resides in the cytoplasm. The enzyme catalyses guanosine(37) in tRNA + S-adenosyl-L-methionine = N(1)-methylguanosine(37) in tRNA + S-adenosyl-L-homocysteine + H(+). In terms of biological role, specifically methylates guanosine-37 in various tRNAs. The protein is tRNA (guanine-N(1)-)-methyltransferase of Salinispora tropica (strain ATCC BAA-916 / DSM 44818 / JCM 13857 / NBRC 105044 / CNB-440).